The sequence spans 365 residues: Succinyl-diaminopimelate desuccinylase (365 aa).

His65 is a Zn(2+) binding site. Asp67 is a catalytic residue. Asp96 contributes to the Zn(2+) binding site. Glu126 acts as the Proton acceptor in catalysis. Glu127, Glu155, and His340 together coordinate Zn(2+).

This sequence belongs to the peptidase M20A family. DapE subfamily. In terms of assembly, homodimer. The cofactor is Zn(2+). Co(2+) is required as a cofactor.

It carries out the reaction N-succinyl-(2S,6S)-2,6-diaminopimelate + H2O = (2S,6S)-2,6-diaminopimelate + succinate. It participates in amino-acid biosynthesis; L-lysine biosynthesis via DAP pathway; LL-2,6-diaminopimelate from (S)-tetrahydrodipicolinate (succinylase route): step 3/3. Functionally, catalyzes the hydrolysis of N-succinyl-L,L-diaminopimelic acid (SDAP), forming succinate and LL-2,6-diaminopimelate (DAP), an intermediate involved in the bacterial biosynthesis of lysine and meso-diaminopimelic acid, an essential component of bacterial cell walls. In Campylobacter jejuni subsp. doylei (strain ATCC BAA-1458 / RM4099 / 269.97), this protein is Succinyl-diaminopimelate desuccinylase.